The sequence spans 1395 residues: DNA-directed RNA polymerase subunit beta' (1395 aa).

Zn(2+)-binding residues include C70, C72, C85, and C88. 3 residues coordinate Mg(2+): D461, D463, and D465. Zn(2+) contacts are provided by C815, C889, C896, and C899.

Belongs to the RNA polymerase beta' chain family. In terms of assembly, the RNAP catalytic core consists of 2 alpha, 1 beta, 1 beta' and 1 omega subunit. When a sigma factor is associated with the core the holoenzyme is formed, which can initiate transcription. It depends on Mg(2+) as a cofactor. Requires Zn(2+) as cofactor.

The catalysed reaction is RNA(n) + a ribonucleoside 5'-triphosphate = RNA(n+1) + diphosphate. In terms of biological role, DNA-dependent RNA polymerase catalyzes the transcription of DNA into RNA using the four ribonucleoside triphosphates as substrates. This is DNA-directed RNA polymerase subunit beta' from Ruthia magnifica subsp. Calyptogena magnifica.